Reading from the N-terminus, the 738-residue chain is Phosphoribosylformylglycinamidine synthase subunit PurL (738 aa).

The active site involves H41. ATP contacts are provided by Y44 and K83. Residue E85 participates in Mg(2+) binding. Substrate contacts are provided by residues 86–89 (SHNH) and R108. The active-site Proton acceptor is H87. D109 contacts Mg(2+). Q233 provides a ligand contact to substrate. A Mg(2+)-binding site is contributed by D261. 305-307 (ESQ) contacts substrate. ATP is bound by residues D490 and G527. N528 is a binding site for Mg(2+). S530 contributes to the substrate binding site.

The protein belongs to the FGAMS family. In terms of assembly, monomer. Part of the FGAM synthase complex composed of 1 PurL, 1 PurQ and 2 PurS subunits.

It is found in the cytoplasm. The catalysed reaction is N(2)-formyl-N(1)-(5-phospho-beta-D-ribosyl)glycinamide + L-glutamine + ATP + H2O = 2-formamido-N(1)-(5-O-phospho-beta-D-ribosyl)acetamidine + L-glutamate + ADP + phosphate + H(+). Its pathway is purine metabolism; IMP biosynthesis via de novo pathway; 5-amino-1-(5-phospho-D-ribosyl)imidazole from N(2)-formyl-N(1)-(5-phospho-D-ribosyl)glycinamide: step 1/2. In terms of biological role, part of the phosphoribosylformylglycinamidine synthase complex involved in the purines biosynthetic pathway. Catalyzes the ATP-dependent conversion of formylglycinamide ribonucleotide (FGAR) and glutamine to yield formylglycinamidine ribonucleotide (FGAM) and glutamate. The FGAM synthase complex is composed of three subunits. PurQ produces an ammonia molecule by converting glutamine to glutamate. PurL transfers the ammonia molecule to FGAR to form FGAM in an ATP-dependent manner. PurS interacts with PurQ and PurL and is thought to assist in the transfer of the ammonia molecule from PurQ to PurL. The polypeptide is Phosphoribosylformylglycinamidine synthase subunit PurL (Alkaliphilus metalliredigens (strain QYMF)).